We begin with the raw amino-acid sequence, 596 residues long: Succinate dehydrogenase flavoprotein subunit (596 aa).

Residues 18–23 (GAGGAG), 41–56 (TKLF…AQGG), and D225 each bind FAD. At H49 the chain carries Tele-8alpha-FAD histidine. Positions 246 and 258 each coordinate substrate. R290 serves as the catalytic Proton acceptor. Position 357 (H357) interacts with substrate. E391 contributes to the FAD binding site. Substrate is bound at residue R402. FAD is bound at residue 407 to 408 (SL).

Belongs to the FAD-dependent oxidoreductase 2 family. FRD/SDH subfamily. Part of an enzyme complex containing four subunits: a flavoprotein, an iron-sulfur, cytochrome b-556, and a hydrophobic anchor protein. FAD is required as a cofactor.

It localises to the cell inner membrane. It catalyses the reaction a quinone + succinate = fumarate + a quinol. It participates in carbohydrate metabolism; tricarboxylic acid cycle; fumarate from succinate (bacterial route): step 1/1. This is Succinate dehydrogenase flavoprotein subunit (sdhA) from Rickettsia felis (strain ATCC VR-1525 / URRWXCal2) (Rickettsia azadi).